Consider the following 205-residue polypeptide: dITP/XTP pyrophosphatase (205 aa).

7–12 (SNNRGK) is a substrate binding site. The Mg(2+) site is built by Glu39 and Asp68. Asp68 serves as the catalytic Proton acceptor. Substrate is bound by residues Ala69, 154-157 (FGFD), Lys177, and 182-183 (HR).

Belongs to the HAM1 NTPase family. As to quaternary structure, homodimer. It depends on Mg(2+) as a cofactor.

The catalysed reaction is XTP + H2O = XMP + diphosphate + H(+). The enzyme catalyses dITP + H2O = dIMP + diphosphate + H(+). It catalyses the reaction ITP + H2O = IMP + diphosphate + H(+). Functionally, pyrophosphatase that catalyzes the hydrolysis of nucleoside triphosphates to their monophosphate derivatives, with a high preference for the non-canonical purine nucleotides XTP (xanthosine triphosphate), dITP (deoxyinosine triphosphate) and ITP. Seems to function as a house-cleaning enzyme that removes non-canonical purine nucleotides from the nucleotide pool, thus preventing their incorporation into DNA/RNA and avoiding chromosomal lesions. This chain is dITP/XTP pyrophosphatase, found in Acidovorax ebreus (strain TPSY) (Diaphorobacter sp. (strain TPSY)).